Consider the following 311-residue polypeptide: tRNA pseudouridine synthase B (311 aa).

Histidine 43 is a binding site for substrate. The active-site Nucleophile is the aspartate 48. Substrate is bound by residues tyrosine 76, tyrosine 179, and leucine 200.

Belongs to the pseudouridine synthase TruB family. Type 1 subfamily.

It carries out the reaction uridine(55) in tRNA = pseudouridine(55) in tRNA. Functionally, responsible for synthesis of pseudouridine from uracil-55 in the psi GC loop of transfer RNAs. The protein is tRNA pseudouridine synthase B of Sodalis glossinidius (strain morsitans).